Consider the following 130-residue polypeptide: Cholecystokinin (130 aa).

A signal peptide spans 1–20; sequence MYSGICIYMFLAMLSTSSSG. Positions 21-60 are excised as a propeptide; sequence QQATGSHNENPVATELEQSLTEHHRHVRVPSSAGQLKPIQ. The residue at position 112 (Tyr112) is a Sulfotyrosine. The residue at position 118 (Phe118) is a Phenylalanine amide. A propeptide spanning residues 122 to 130 is cleaved from the precursor; the sequence is SAEEYEYSS. A sulfotyrosine mark is found at Tyr126 and Tyr128.

The protein belongs to the gastrin/cholecystokinin family. Post-translationally, the precursor is cleaved by proteases to produce a number of active cholecystokinins. In terms of tissue distribution, expressed in brain, duodenum and small intestine.

The protein localises to the secreted. Its function is as follows. This peptide hormone induces gall bladder contraction and the release of pancreatic enzymes in the gut. Its function in the brain is not clear. In Trachemys scripta (Red-eared slider turtle), this protein is Cholecystokinin.